The primary structure comprises 815 residues: Cell division control protein 48 homolog D (815 aa).

Alanine 2 carries the post-translational modification N-acetylalanine. The residue at position 42 (serine 42) is a Phosphoserine. Residues 249-256 and 522-529 each bind ATP; these read GPPGSGKT and GPPGCGKT. Residue serine 720 is modified to Phosphoserine. The segment at 772–815 is disordered; the sequence is GSEFRFPDAPTGTTGAFPGAAATVGGVDPFATSGGAADDDDLYS. Residues 780-798 show a composition bias toward low complexity; the sequence is APTGTTGAFPGAAATVGGV.

It belongs to the AAA ATPase family.

Its subcellular location is the nucleus. The protein resides in the cytoplasm. The protein localises to the cytoskeleton. It is found in the phragmoplast. In terms of biological role, probably functions in cell division and growth processes. Interacts with certain SNAREs as part of specialized membrane fusion events where vesicles from the same organelle fuse (homotypic fusion). The polypeptide is Cell division control protein 48 homolog D (CDC48D) (Arabidopsis thaliana (Mouse-ear cress)).